The chain runs to 367 residues: Heat-inducible transcription repressor HrcA (367 aa).

Belongs to the HrcA family.

In terms of biological role, negative regulator of class I heat shock genes (grpE-dnaK-dnaJ and groELS operons). Prevents heat-shock induction of these operons. The protein is Heat-inducible transcription repressor HrcA of Acaryochloris marina (strain MBIC 11017).